Here is a 581-residue protein sequence, read N- to C-terminus: Dehydrocurvularin exporter (581 aa).

Positions 1–10 (MTDSPSLESN) are enriched in polar residues. The interval 1–47 (MTDSPSLESNNKSDMDTPRPPASSHDEHDAAESVSEKQDSATTSPTG) is disordered. An N-linked (GlcNAc...) asparagine glycan is attached at Asn11. Positions 24–39 (SHDEHDAAESVSEKQD) are enriched in basic and acidic residues. Transmembrane regions (helical) follow at residues 61–81 (LVMF…GIIA), 96–116 (DVGW…PLWG), 126–146 (WVYL…AAAP), 159–179 (GWGA…VAPP), 184–204 (LLIG…PVIG), 215–235 (WCFW…LLFL), 251–271 (IILN…VCLT), 288–308 (VIAT…VEWL), 330–350 (IFCL…PIYF), 363–383 (VNTL…GGAI), 392–412 (YELA…ILDV), 424–444 (VLFG…VQGF), 456–476 (IMVM…QSLF), and 527–547 (VFAF…LIPF). Positions 552 to 581 (DHEKKPSKDAMASDEVKASEEVQQEKKVTV) are disordered. Basic and acidic residues predominate over residues 565–581 (DEVKASEEVQQEKKVTV).

This sequence belongs to the major facilitator superfamily. TCR/Tet family.

The protein localises to the cell membrane. Its function is as follows. Efflux pump that is probably involved in the export of dehydrocurvularin. The protein is Dehydrocurvularin exporter of Alternaria cinerariae.